The primary structure comprises 367 residues: MVKIMAPITPTTSPQVKGLLSRFLTAPDRHPKLRYVYDISLIAISILCIVSIILWTQGSGLALFAIAPALAIGALGVTLLVSDLAESPKSKEVADTVAAVSLPFILTGTAAGLMFSAIAVGGGAVILANPLFLMGSMTLGFALMSLHKVTYQYLSNRSQWQKQNKIKQIESAAWENKLPKESKESSLQTSVRYSSLARKDKTRRNKPGMPNKGSQVPASIANTERSLRSEEVLHSQSLLRQKELFPNTSNIKKELPNTKSILHTPLNRRSPSGSDSDDVYYTPRAGLSSAETSALGDISGISSSSTSSKTSTPKAKRRVVRSSRSERNARHHRNKEDHRQNQEESSDDEDSSPLPSPRRKKYRSRPK.

4 consecutive transmembrane segments (helical) span residues 35–55, 61–81, 92–112, and 113–133; these read YVYD…IILW, LALF…TLLV, EVAD…TAAG, and LMFS…PLFL. Disordered stretches follow at residues 177–220, 249–283, and 296–367; these read KLPK…PASI, SNIK…YYTP, and GDIS…SRPK. Residues 257–274 show a composition bias toward polar residues; that stretch reads NTKSILHTPLNRRSPSGS. The span at 302–312 shows a compositional bias: low complexity; sequence SSSSTSSKTST. Residues 323–342 are compositionally biased toward basic and acidic residues; it reads SRSERNARHHRNKEDHRQNQ. The segment covering 357 to 367 has biased composition (basic residues); the sequence is PRRKKYRSRPK.

This sequence belongs to the chlamydial CPn_0443/CT_005/TC_0273 family.

It localises to the cell membrane. This is an uncharacterized protein from Chlamydia muridarum (strain MoPn / Nigg).